The chain runs to 144 residues: MLTPKRVKHRKQHRGKMAGNAKGGTTVAFGEYGLQAMEPSWVTNRQIEAARIAMTRYIKRGGKVWIKIFPDKPVTQKPLEVRMGSGKGSPEKWVAVVKPGKIMFELAGVPEEVAREAMRLAMHKLPIKCKFVKREEVGGDAHEG.

Positions 1–16 are enriched in basic residues; it reads MLTPKRVKHRKQHRGK. Residues 1 to 22 are disordered; that stretch reads MLTPKRVKHRKQHRGKMAGNAK.

This sequence belongs to the universal ribosomal protein uL16 family. As to quaternary structure, part of the 50S ribosomal subunit.

Its function is as follows. Binds 23S rRNA and is also seen to make contacts with the A and possibly P site tRNAs. The polypeptide is Large ribosomal subunit protein uL16 (Brevibacillus brevis (strain 47 / JCM 6285 / NBRC 100599)).